A 435-amino-acid chain; its full sequence is Prenyltransferase nanD (435 aa).

Glu-101 provides a ligand contact to substrate. Dimethylallyl diphosphate-binding residues include Arg-114, Lys-202, and Tyr-204. Tyr-206 contributes to the substrate binding site. Dimethylallyl diphosphate is bound by residues Lys-280, Tyr-282, Tyr-364, Tyr-429, and Tyr-433.

This sequence belongs to the tryptophan dimethylallyltransferase family.

The protein operates within secondary metabolite biosynthesis. Functionally, prenyltransferase; part of the gene cluster that mediates the biosynthesis of the benzazepine alkaloid nanangelenin A which contains an unprecedented 3,4-dihydro-1-benzazepine-2,5-dione-N-prenyl-N-acetoxy-anthranilamide scaffold. The first step of nanangelenin biosynthesis is catalyzed by the indoleamine 2,3-dioxygenase nanC which produces N-formyl-kynurenine through the catabolism of tryptophan. The two-module NRPS nanA then utilizes anthranilate (Ant) and L-kynurenine (L-Kyn) to assemble the dipeptide product nanangelenin B. The first adenylation domain of nanA (A1) loads anthranilate onto the T1 domain, while A2 loads kynurenine, generated through spontaneous nonenzymatic deformylation of the nanC-supplied N-formyl-kynurenine. The peptide bond formation between the tethered amino acids is catalyzed by the first condensation domain (C1) between anthranilate's carbonyl carbon and kynurenine's aliphatic primary amine. The second C domain (C2) catalyzes the final cyclization event between the aromatic amine of kynurenine and the tethered carbonyl carbon, yielding nanangelenin B. The terminal T3 domain enhances the catalytic efficiency of C2, suggesting the T2-tethered Ant-L-Kyn is transferred to T3 prior to cyclization by C2. Once released from nanA, nanangelenin B is then prenylated by the prenyltransferase nanD to form nanangelenin C. Nanangelenin C is then N-hydroxylated by the FAD-dependent monooxygenase nanF and further acetylated by the acetyltransferase nanB to yield nanangelenin F. Finally, the N-methyltransferase nanE methylates the amide nitrogen of 1-benzazepine to convert nanangelenin F into nanangelenin A. NanE is also able to methylate most of the intermediates of the pathway such as nanangelenin B and nanangelenin C to produce nanangelenin D and nanangelenin E, respectively. In Aspergillus nanangensis, this protein is Prenyltransferase nanD.